Consider the following 700-residue polypeptide: MARTTPISLYRNIGISAHIDAGKTTTTERILFYTGVSHKIGEVHDGAATMDWMEQEQERGITITSAATTAFWSGMSQQFPQHRINVIDTPGHVDFTIEVERSMRVLDGAVMVYCAVGGVQPQSETVWRQANKYKVPRIAFVNKMDRTGANFLRVVEQIKTRLGGNAVPLQLPIGAEDNFKGVVDLIKMKAINWNEADQGMTFTYEDIPAEMLAECEKWRANLVEAAAESSDELMDKFFSGDELTEEEIKKGLRLRALKTEIILVTCGSAFKNKGVQAMLDAVIDYLPAPTDIEAIKGINPDETEGERHASDDEPFAALAFKIATDPFVGNLTFFRVYSGVVESGATVLNSVKDKRERFGRIVQMHANKREEIKEVRAGDIAAAIGLKDVGTGDTLCAMDAPIILERMEFPEPVISVAVEPKTKADQEKMGLALGRLAQEDPSFRVHTDEESGETIISGMGELHLDIIVDRMRREFKVEANIGKPQVSYRETIRTRVNDVEGKHAKQSGGRGQYGHVVIDLYPLEPEGPGYEFVNEIKGGVIPGEYIPAVDKGIQEQLKSGPLAGYPVVDLGVRLHFGSYHDVDSSELAFKLAASLAFKAAFNKANPVLLEPIMKVEVETPPDYVGDVIGDLSRRRAMVSGQEANEFVVKINAEVPLAEMFGYATDLRSQTQGRASYSMEPLKYAEAPKNVADAVIEARKK.

The tr-type G domain occupies 8–290; sequence SLYRNIGISA…AVIDYLPAPT (283 aa). GTP contacts are provided by residues 17–24, 88–92, and 142–145; these read AHIDAGKT, DTPGH, and NKMD.

It belongs to the TRAFAC class translation factor GTPase superfamily. Classic translation factor GTPase family. EF-G/EF-2 subfamily.

It is found in the cytoplasm. In terms of biological role, catalyzes the GTP-dependent ribosomal translocation step during translation elongation. During this step, the ribosome changes from the pre-translocational (PRE) to the post-translocational (POST) state as the newly formed A-site-bound peptidyl-tRNA and P-site-bound deacylated tRNA move to the P and E sites, respectively. Catalyzes the coordinated movement of the two tRNA molecules, the mRNA and conformational changes in the ribosome. The protein is Elongation factor G of Histophilus somni (strain 129Pt) (Haemophilus somnus).